The chain runs to 85 residues: Large ribosomal subunit protein bL27 (85 aa).

The segment covering 1-10 (MAQKKGGGST) has biased composition (gly residues). The segment at 1–20 (MAQKKGGGSTRNGRDSQPKM) is disordered.

It belongs to the bacterial ribosomal protein bL27 family.

The polypeptide is Large ribosomal subunit protein bL27 (Methylibium petroleiphilum (strain ATCC BAA-1232 / LMG 22953 / PM1)).